Here is a 285-residue protein sequence, read N- to C-terminus: Bifunctional protein FolD (285 aa).

NADP(+) contacts are provided by residues 163 to 165 (GRS) and S188.

This sequence belongs to the tetrahydrofolate dehydrogenase/cyclohydrolase family. Homodimer.

The enzyme catalyses (6R)-5,10-methylene-5,6,7,8-tetrahydrofolate + NADP(+) = (6R)-5,10-methenyltetrahydrofolate + NADPH. The catalysed reaction is (6R)-5,10-methenyltetrahydrofolate + H2O = (6R)-10-formyltetrahydrofolate + H(+). Its pathway is one-carbon metabolism; tetrahydrofolate interconversion. Its function is as follows. Catalyzes the oxidation of 5,10-methylenetetrahydrofolate to 5,10-methenyltetrahydrofolate and then the hydrolysis of 5,10-methenyltetrahydrofolate to 10-formyltetrahydrofolate. This is Bifunctional protein FolD from Lactococcus lactis subsp. cremoris (strain MG1363).